The primary structure comprises 1217 residues: MFLYNLTLQRATGISFAIHGNFSGTKQQEIVVSRGKILELLRPDPNTGKVHTLLTVEVFGVIRSLMAFRLTGGTKDYIVVGSDSGRIVILEYQPSKNMFEKIHQETFGKSGCRRIVPGQFLAVDPKGRAVMISAIEKQKLVYILNRDAAARLTISSPLEAHKANTLVYHVVGVDVGFENPMFACLEMDYEEADNDPTGEAAANTQQTLTFYELDLGLNHVVRKYSEPLEEHGNFLITVPGGSDGPSGVLICSENYITYKNFGDQPDIRCPIPRRRNDLDDPERGMIFVCSATHKTKSMFFFLAQTEQGDIFKITLETDEDMVTEIRLKYFDTVPVAAAMCVLKTGFLFVASEFGNHYLYQIAHLGDDDEEPEFSSAMPLEEGDTFFFQPRPLKNLVLVDELDSLSPILFCQIADLANEDTPQLYVACGRGPRSSLRVLRHGLEVSEMAVSELPGNPNAVWTVRRHIEDEFDAYIIVSFVNATLVLSIGETVEEVTDSGFLGTTPTLSCSLLGDDALVQVYPDGIRHIRADKRVNEWKTPGKKTIVKCAVNQRQVVIALTGGELVYFEMDPSGQLNEYTERKEMSADVVCMSLANVPPGEQRSRFLAVGLVDNTVRIISLDPSDCLQPLSMQALPAQPESLCIVEMGGTEKQDELGERGSIGFLYLNIGLQNGVLLRTVLDPVTGDLSDTRTRYLGSRPVKLFRVRMQGQEAVLAMSSRSWLSYSYQSRFHLTPLSYETLEFASGFASEQCPEGIVAISTNTLRILALEKLGAVFNQVAFPLQYTPRKFVIHPESNNLIIIETDHNAYTEATKAQRKQQMAEEMVEAAGEDERELAAEMAAAFLNENLPESIFGAPKAGNGQWASVIRVMNPIQGNTLDLVQLEQNEAAFSVAVCRFSNTGEDWYVLVGVAKDLILNPRSVAGGFVYTYKLVNNGEKLEFLHKTPVEEVPAAIAPFQGRVLIGVGKLLRVYDLGKKKLLRKCENKHIANYISGIQTIGHRVIVSDVQESFIWVRYKRNENQLIIFADDTYPRWVTTASLLDYDTVAGADKFGNICVVRLPPNTNDEVDEDPTGNKALWDRGLLNGASQKAEVIMNYHVGETVLSLQKTTLIPGGSESLVYTTLSGGIGILVPFTSHEDHDFFQHVEMHLRSEHPPLCGRDHLSFRSYYFPVKNVIDGDLCEQFNSMEPNKQKNVSEELDRTPPEVSKKLEDIRTRYAF.

Interaction with PHF5A, SF3B1 and SF3B5 stretches follow at residues 105–119 and 145–168; these read ETFGKSGCRRIVPGQ and NRDAAARLTISSPLEAHKANTLVY. Phosphoserine is present on serine 156. Interaction with SF3B1 and SF3B5 stretches follow at residues 193–231 and 786–804; these read DNDPTGEAAANTQQTLTFYELDLGLNHVVRKYSEPLEEH and RKFVIHPESNNLIIIETDH. The interval 1028-1049 is interaction with SF3B1; it reads TYPRWVTTASLLDYDTVAGADK. Residues 1100 to 1123 are interaction with SF3B5; the sequence is TVLSLQKTTLIPGGSESLVYTTLS. Threonine 1200 carries the phosphothreonine modification.

It belongs to the RSE1 family. Component of the 17S U2 SnRNP complex, a ribonucleoprotein complex that contains small nuclear RNA (snRNA) U2 and a number of specific proteins. Part of the SF3B subcomplex of the 17S U2 SnRNP complex. SF3B associates with the splicing subcomplex SF3A and a 12S RNA unit to form the U2 small nuclear ribonucleoproteins complex (U2 snRNP). Within the SF3B subcomplex, interacts directly with SF3B1 (via HEAT domain), SF3B5 and PHF5A. Identified in the spliceosome A complex; remains associated with the spliceosome throughout the splicing process. Component of the spliceosome B complex. Identified in the spliceosome C complex. Identified in the spliceosome E complex. Component of the minor (U12-type spliceosome) spliceosome. Within this complex, interacts with SCNM1. Associates with the STAGA transcription coactivator-HAT complex. Interacts with SUPT3H. Interacts with TAF3.

It localises to the nucleus. Component of the 17S U2 SnRNP complex of the spliceosome, a large ribonucleoprotein complex that removes introns from transcribed pre-mRNAs. The 17S U2 SnRNP complex (1) directly participates in early spliceosome assembly and (2) mediates recognition of the intron branch site during pre-mRNA splicing by promoting the selection of the pre-mRNA branch-site adenosine, the nucleophile for the first step of splicing. Within the 17S U2 SnRNP complex, SF3B3 is part of the SF3B subcomplex, which is required for 'A' complex assembly formed by the stable binding of U2 snRNP to the branchpoint sequence in pre-mRNA. Sequence independent binding of SF3A and SF3B subcomplexes upstream of the branch site is essential, it may anchor U2 snRNP to the pre-mRNA. May also be involved in the assembly of the 'E' complex. Also acts as a component of the minor spliceosome, which is involved in the splicing of U12-type introns in pre-mRNAs. This Bos taurus (Bovine) protein is Splicing factor 3B subunit 3 (SF3B3).